The chain runs to 258 residues: Imidazole glycerol phosphate synthase subunit HisF (258 aa).

Catalysis depends on residues Asp11 and Asp130.

This sequence belongs to the HisA/HisF family. Heterodimer of HisH and HisF.

It localises to the cytoplasm. The enzyme catalyses 5-[(5-phospho-1-deoxy-D-ribulos-1-ylimino)methylamino]-1-(5-phospho-beta-D-ribosyl)imidazole-4-carboxamide + L-glutamine = D-erythro-1-(imidazol-4-yl)glycerol 3-phosphate + 5-amino-1-(5-phospho-beta-D-ribosyl)imidazole-4-carboxamide + L-glutamate + H(+). Its pathway is amino-acid biosynthesis; L-histidine biosynthesis; L-histidine from 5-phospho-alpha-D-ribose 1-diphosphate: step 5/9. In terms of biological role, IGPS catalyzes the conversion of PRFAR and glutamine to IGP, AICAR and glutamate. The HisF subunit catalyzes the cyclization activity that produces IGP and AICAR from PRFAR using the ammonia provided by the HisH subunit. This chain is Imidazole glycerol phosphate synthase subunit HisF, found in Xanthobacter autotrophicus (strain ATCC BAA-1158 / Py2).